A 254-amino-acid polypeptide reads, in one-letter code: Hydroxyacylglutathione hydrolase (254 aa).

Zn(2+) is bound by residues histidine 54, histidine 56, aspartate 58, histidine 59, histidine 111, aspartate 130, and histidine 168.

It belongs to the metallo-beta-lactamase superfamily. Glyoxalase II family. As to quaternary structure, monomer. The cofactor is Zn(2+).

It catalyses the reaction an S-(2-hydroxyacyl)glutathione + H2O = a 2-hydroxy carboxylate + glutathione + H(+). The protein operates within secondary metabolite metabolism; methylglyoxal degradation; (R)-lactate from methylglyoxal: step 2/2. Thiolesterase that catalyzes the hydrolysis of S-D-lactoyl-glutathione to form glutathione and D-lactic acid. In Legionella pneumophila (strain Lens), this protein is Hydroxyacylglutathione hydrolase.